Consider the following 490-residue polypeptide: ATP synthase subunit alpha 1 (490 aa).

171–178 (GDNGLGKS) contributes to the ATP binding site.

The protein belongs to the ATPase alpha/beta chains family. In terms of assembly, F-type ATPases have 2 components, CF(1) - the catalytic core - and CF(0) - the membrane proton channel. CF(1) has five subunits: alpha(3), beta(3), gamma(1), delta(1), epsilon(1). CF(0) has three main subunits: a(1), b(2) and c(9-12). The alpha and beta chains form an alternating ring which encloses part of the gamma chain. CF(1) is attached to CF(0) by a central stalk formed by the gamma and epsilon chains, while a peripheral stalk is formed by the delta and b chains.

The protein localises to the cell inner membrane. It catalyses the reaction ATP + H2O + 4 H(+)(in) = ADP + phosphate + 5 H(+)(out). Its function is as follows. Produces ATP from ADP in the presence of a proton gradient across the membrane. The alpha chain is a regulatory subunit. The protein is ATP synthase subunit alpha 1 of Legionella pneumophila (strain Corby).